A 270-amino-acid polypeptide reads, in one-letter code: Aliphatic sulfonates import ATP-binding protein SsuB 3 (270 aa).

One can recognise an ABC transporter domain in the interval 17 to 238; sequence LAVRKLKKAF…VRGSHRLAAL (222 aa). 49–56 contributes to the ATP binding site; it reads GRSGCGKS.

Belongs to the ABC transporter superfamily. Aliphatic sulfonates importer (TC 3.A.1.17.2) family. The complex is composed of two ATP-binding proteins (SsuB), two transmembrane proteins (SsuC) and a solute-binding protein (SsuA).

It is found in the cell inner membrane. It carries out the reaction ATP + H2O + aliphatic sulfonate-[sulfonate-binding protein]Side 1 = ADP + phosphate + aliphatic sulfonateSide 2 + [sulfonate-binding protein]Side 1.. Its function is as follows. Part of the ABC transporter complex SsuABC involved in aliphatic sulfonates import. Responsible for energy coupling to the transport system. The chain is Aliphatic sulfonates import ATP-binding protein SsuB 3 from Pseudomonas syringae pv. syringae (strain B728a).